The chain runs to 426 residues: Dihydroorotase (426 aa).

Positions 58 and 60 each coordinate Zn(2+). Substrate is bound by residues 60-62 (HLR) and asparagine 92. Zn(2+) contacts are provided by aspartate 150, histidine 177, and histidine 230. Residue asparagine 276 participates in substrate binding. A Zn(2+)-binding site is contributed by aspartate 303. The active site involves aspartate 303. Substrate is bound by residues histidine 307 and 321–322 (FG).

This sequence belongs to the metallo-dependent hydrolases superfamily. DHOase family. Class I DHOase subfamily. Zn(2+) serves as cofactor.

It catalyses the reaction (S)-dihydroorotate + H2O = N-carbamoyl-L-aspartate + H(+). Its pathway is pyrimidine metabolism; UMP biosynthesis via de novo pathway; (S)-dihydroorotate from bicarbonate: step 3/3. Catalyzes the reversible cyclization of carbamoyl aspartate to dihydroorotate. The protein is Dihydroorotase of Listeria monocytogenes serotype 4b (strain CLIP80459).